A 256-amino-acid polypeptide reads, in one-letter code: Peroxisomal membrane protein PMP30B (256 aa).

Belongs to the peroxin-11 family.

The protein resides in the peroxisome membrane. In terms of biological role, involved in peroxisomal proliferation. Could participate in peroxisomal elongation or fission. May be involved in parceling of peroxisomes into regular quanta. The polypeptide is Peroxisomal membrane protein PMP30B (PEX11B) (Candida boidinii (Yeast)).